The chain runs to 97 residues: Large ribosomal subunit protein eL21 (97 aa).

The disordered stretch occupies residues 1 to 26 (MQKSEGFRSKTRYKLQKHPRQKGMAP). Residues 9–21 (SKTRYKLQKHPRQ) show a composition bias toward basic residues.

Belongs to the eukaryotic ribosomal protein eL21 family.

In Methanococcus maripaludis (strain C5 / ATCC BAA-1333), this protein is Large ribosomal subunit protein eL21.